Reading from the N-terminus, the 351-residue chain is Transmembrane protein DDB_G0272716 (351 aa).

Residues asparagine 4 and asparagine 59 are each glycosylated (N-linked (GlcNAc...) asparagine). 2 helical membrane-spanning segments follow: residues 175-195 and 215-235; these read FSSL…TAIG and VVAP…GAFI. N-linked (GlcNAc...) asparagine glycosylation is present at asparagine 345.

The protein localises to the membrane. This is Transmembrane protein DDB_G0272716 from Dictyostelium discoideum (Social amoeba).